The chain runs to 152 residues: Transcriptional regulator MraZ (152 aa).

SpoVT-AbrB domains follow at residues 5 to 52 (ASAV…PLNQ) and 81 to 124 (ATEC…SESE).

The protein belongs to the MraZ family. Forms oligomers.

Its subcellular location is the cytoplasm. It localises to the nucleoid. The protein is Transcriptional regulator MraZ of Histophilus somni (strain 129Pt) (Haemophilus somnus).